The following is a 291-amino-acid chain: 4-hydroxy-tetrahydrodipicolinate synthase (291 aa).

Threonine 45 serves as a coordination point for pyruvate. Residue tyrosine 133 is the Proton donor/acceptor of the active site. The active-site Schiff-base intermediate with substrate is the lysine 161. Isoleucine 203 provides a ligand contact to pyruvate.

Belongs to the DapA family. As to quaternary structure, homotetramer; dimer of dimers.

Its subcellular location is the cytoplasm. The catalysed reaction is L-aspartate 4-semialdehyde + pyruvate = (2S,4S)-4-hydroxy-2,3,4,5-tetrahydrodipicolinate + H2O + H(+). It participates in amino-acid biosynthesis; L-lysine biosynthesis via DAP pathway; (S)-tetrahydrodipicolinate from L-aspartate: step 3/4. Catalyzes the condensation of (S)-aspartate-beta-semialdehyde [(S)-ASA] and pyruvate to 4-hydroxy-tetrahydrodipicolinate (HTPA). The polypeptide is 4-hydroxy-tetrahydrodipicolinate synthase (Saccharophagus degradans (strain 2-40 / ATCC 43961 / DSM 17024)).